A 176-amino-acid polypeptide reads, in one-letter code: MILANDELKRLISTGRLKVDPLYPDTVRENGLDLRIGGEYAIYAYESTVVRPCDLETAKPLFRIVKSDEVVIPPRNFVLLTTEEYVKMPDDVVGFANLRSTLARYGLVIPPTIVDAGFEGNITIEVVNESPNTIVLKRGMRFLHLVLAKAEGRAQYSGLYQGQRGVTPPKGLKGEC.

DCTP is bound by residues 99 to 104 (RSTLAR) and D115. Residue E125 is the Proton donor/acceptor of the active site. Q163 lines the dCTP pocket.

This sequence belongs to the dCTP deaminase family. Homotrimer.

The catalysed reaction is dCTP + H2O + H(+) = dUTP + NH4(+). It participates in pyrimidine metabolism; dUMP biosynthesis; dUMP from dCTP (dUTP route): step 1/2. Its function is as follows. Catalyzes the deamination of dCTP to dUTP. This chain is dCTP deaminase, found in Pyrobaculum arsenaticum (strain DSM 13514 / JCM 11321 / PZ6).